The sequence spans 218 residues: N-(5'-phosphoribosyl)anthranilate isomerase (218 aa).

This sequence belongs to the TrpF family.

The enzyme catalyses N-(5-phospho-beta-D-ribosyl)anthranilate = 1-(2-carboxyphenylamino)-1-deoxy-D-ribulose 5-phosphate. Its pathway is amino-acid biosynthesis; L-tryptophan biosynthesis; L-tryptophan from chorismate: step 3/5. In Stenotrophomonas maltophilia (strain K279a), this protein is N-(5'-phosphoribosyl)anthranilate isomerase.